Reading from the N-terminus, the 396-residue chain is Elongation factor Tu (396 aa).

In terms of domain architecture, tr-type G spans 10 to 206 (KPHVNVGTIG…ALDTYIPTPE (197 aa)). The tract at residues 19–26 (GHVDHGKT) is G1. 19-26 (GHVDHGKT) contacts GTP. Residue T26 participates in Mg(2+) binding. The interval 60–64 (GITIN) is G2. The G3 stretch occupies residues 81-84 (DCPG). GTP is bound by residues 81 to 85 (DCPGH) and 136 to 139 (NKCD). Residues 136 to 139 (NKCD) form a G4 region. Positions 174-176 (SAK) are G5.

This sequence belongs to the TRAFAC class translation factor GTPase superfamily. Classic translation factor GTPase family. EF-Tu/EF-1A subfamily. In terms of assembly, monomer.

Its subcellular location is the cytoplasm. It carries out the reaction GTP + H2O = GDP + phosphate + H(+). Functionally, GTP hydrolase that promotes the GTP-dependent binding of aminoacyl-tRNA to the A-site of ribosomes during protein biosynthesis. The polypeptide is Elongation factor Tu (Polynucleobacter asymbioticus (strain DSM 18221 / CIP 109841 / QLW-P1DMWA-1) (Polynucleobacter necessarius subsp. asymbioticus)).